A 553-amino-acid chain; its full sequence is MSDIALTVSVLALVAVVGLWIGNIKVRGVGFGIGGVLFGGIIVGHFVDQAGVTLSGDMLHFIQEFGLILFVYTIGIQVGPGFFASLRVSGLRLNLFAVLIVIMGGLVTAILHKIFAIPLPVVLGIFSGAVTNTPALGAGQQILRDLGTPVDLVDQMGMSYAMAYPFGICGILLTMWLMRLIFRVNVEAEAQKHESSLANGHSLIQTMNIRVENPNLNNMAIQDVPILNSDKIICSRLKRDDTLMVPSPGTIIQAGDLLHLVGQSTDLHNAQLVIGKEVDTSLSTRGTDLRVERVVVTNEKVLGKRIRDLHFKERYDVVISRLNRAGVELVASSDASLQFGDILNLVGRPASIDAVANVVGNAQQKLQQVQMLPVFIGIGLGVLLGSIPLFVPGFPVALKLGLAGGPLIMALILGRIGSIGKLYWFMPPSANLALRELGIVLFLAVVGLKSGGDFVDTLTQGEGLSWIGYGIFITAIPLITVGLLARIFAKMNYLTLCGMLAGSMTDPPALAFANNLHATSGAAALSYATVYPLVMFLRIITPQLLAVIFWGMG.

5 consecutive transmembrane segments (helical) span residues 4–24 (IALT…IGNI), 28–48 (GVGF…HFVD), 65–85 (FGLI…FFAS), 95–115 (LFAV…HKIF), and 158–178 (MSYA…MWLM). RCK C-terminal domains follow at residues 192–276 (KHES…VIGK) and 279–361 (DTSL…VVGN). The next 6 helical transmembrane spans lie at 371 to 391 (MLPV…PLFV), 393 to 413 (GFPV…ALIL), 437 to 457 (LGIV…FVDT), 464 to 484 (LSWI…VGLL), 493 to 513 (YLTL…LAFA), and 533 to 553 (LVMF…WGMG).

The protein belongs to the AAE transporter (TC 2.A.81) family. YidE subfamily.

Its subcellular location is the cell membrane. The protein is Putative transport protein YidE of Salmonella newport (strain SL254).